Reading from the N-terminus, the 367-residue chain is Probable sugar phosphate/phosphate translocator At1g48230 (367 aa).

Helical transmembrane passes span 9-29 (LVLTYIYLLIYIILSSGVILY), 43-63 (LPITLTMIHMGFSGFVAFLLI), 76-96 (FEIYVTCVVPISAFFASSLWF), 106-126 (VAFIQMLKALMPVATFLMAVV), 140-160 (MVLVSVGVVVSSYGEINFNVI), 163-183 (VYQVMGIFAEALRLVLTQVLL), 193-213 (VTSLYYIAPCSFVFLSLPWYV), 229-249 (WIFFSNALCALALNFSIFLVI), 257-276 (IRVAGVLKDWILIALSTVIF), and 280-302 (TITGLNITGYAIALCGVVMYNYI). The span at 321–330 (ITKDWKEKNS) shows a compositional bias: basic and acidic residues. The disordered stretch occupies residues 321–341 (ITKDWKEKNSSDGGSPRGLEL).

Belongs to the TPT transporter family. TPT (TC 2.A.7.9) subfamily.

It is found in the membrane. In Arabidopsis thaliana (Mouse-ear cress), this protein is Probable sugar phosphate/phosphate translocator At1g48230.